Here is a 313-residue protein sequence, read N- to C-terminus: Porphobilinogen deaminase (313 aa).

The residue at position 242 (Cys242) is an S-(dipyrrolylmethanemethyl)cysteine.

Belongs to the HMBS family. In terms of assembly, monomer. It depends on dipyrromethane as a cofactor.

The enzyme catalyses 4 porphobilinogen + H2O = hydroxymethylbilane + 4 NH4(+). It participates in porphyrin-containing compound metabolism; protoporphyrin-IX biosynthesis; coproporphyrinogen-III from 5-aminolevulinate: step 2/4. Its function is as follows. Tetrapolymerization of the monopyrrole PBG into the hydroxymethylbilane pre-uroporphyrinogen in several discrete steps. The polypeptide is Porphobilinogen deaminase (Pseudomonas fluorescens (strain SBW25)).